The primary structure comprises 370 residues: Tomoregulin-1 (370 aa).

Residues 1 to 36 (MDGLHPASWMLLLGSLAFWSASSLLLFSLALPGARA) form the signal peptide. Topologically, residues 37 to 320 (SNQLLSECHN…VPSRQKLTHV (284 aa)) are extracellular. An N-linked (GlcNAc...) asparagine glycan is attached at asparagine 53. Kazal-like domains follow at residues 88–135 (ICQF…PCFS) and 179–227 (VCNI…SCIE). 9 cysteine pairs are disulfide-bonded: cysteine 89-cysteine 119, cysteine 93-cysteine 112, cysteine 101-cysteine 133, cysteine 180-cysteine 211, cysteine 184-cysteine 204, cysteine 193-cysteine 225, cysteine 265-cysteine 278, cysteine 273-cysteine 289, and cysteine 291-cysteine 300. An EGF-like domain is found at 261–301 (NYIPCSENYNGYCVHGKCELSYSSQKASCRCDSGYTGQYCD). The chain crosses the membrane as a helical span at residues 321–341 (LIAAIIGAVQIAIIVAIVMCI). Topologically, residues 342 to 370 (TRKCPKNNRGRRQKQNLGHFSSDTSSRMV) are cytoplasmic. A disordered region spans residues 349–370 (NRGRRQKQNLGHFSSDTSSRMV). Over residues 356–370 (QNLGHFSSDTSSRMV) the composition is skewed to polar residues.

Belongs to the tomoregulin family. Interacts with cripto. In terms of tissue distribution, expressed at highest levels in brain, and at lower levels in neuroendocrine tissues. Present in neurons from the diencephalon (at protein level).

It is found in the cell membrane. Functionally, inhibits nodal/nr-1 and bmp signaling during neural patterning through interaction with cripto. This Xenopus laevis (African clawed frog) protein is Tomoregulin-1 (tmeff1).